The following is a 293-amino-acid chain: SAGA-associated factor 29 (293 aa).

The stretch at 3–88 (LVSADSRIAE…KALDKIAEIK (86 aa)) forms a coiled coil. The region spanning 152–293 (GDYVARPGDK…VVACKEPKKK (142 aa)) is the SGF29 C-terminal domain. Histone H3K4me3 N-terminus binding stretches follow at residues 194–196 (DID) and 240–243 (QTTC). Residues 264 to 266 (FED) form a histone H3K4me3 binding region. Lys-288 carries the N6-acetyllysine modification.

It belongs to the SGF29 family. Interacts with dimethylated and trimethylated 'Lys-4' of histone H3 (H3K4me2 and H3K4me3), with a preference for the trimethylated form (H3K4me3). Component of some SAGA-type complexes. Component of the ADA2A-containing complex (ATAC), composed of KAT14, KAT2A, TADA2L, TADA3L, ZZ3, MBIP, WDR5, YEATS2, CCDC101 and DR1. Interacts with (methylated) CGAS. Interacts with TADA3L, GCN5L2, SUPT3H and MYC.

It is found in the nucleus. In terms of biological role, chromatin reader component of some histone acetyltransferase (HAT) SAGA-type complexes like the TFTC-HAT, ATAC or STAGA complexes. SGF29 specifically recognizes and binds methylated 'Lys-4' of histone H3 (H3K4me), with a preference for trimethylated form (H3K4me3). In the SAGA-type complexes, SGF29 is required to recruit complexes to H3K4me. Involved in the response to endoplasmic reticulum (ER) stress by recruiting the SAGA complex to H3K4me, thereby promoting histone H3 acetylation and cell survival. Also binds non-histone proteins that are methylated on Lys residues: specifically recognizes and binds CGAS monomethylated on 'Lys-506'. In Homo sapiens (Human), this protein is SAGA-associated factor 29.